A 221-amino-acid polypeptide reads, in one-letter code: CDC5 pindle pole body anchor protein 1 (221 aa).

A disordered region spans residues 142–221 (KNIERDNLKP…PTEDSVPHAE (80 aa)). 3 positions are modified to phosphoserine: S158, S170, and S175. Residues 165–170 (PLVTSS) carry the CDC5-binding motif. A compositionally biased stretch (polar residues) spans 166 to 188 (LVTSSPIHMSPLQSRQRPVSSLQ). The short motif at 189-195 (PPKGPNF) is the CLB3-docking element. Residues 200–202 (PKL) carry the CDC14-binding motif.

As to quaternary structure, interacts with CDC5 and CDC14. In terms of processing, phosphorylated by CLB3-CDK1 in metaphase which is required for correct localization at the nuclear envelop and the spindle pole body, and dephosphorylated by CDC14 in early anaphase.

Its subcellular location is the nucleus membrane. The protein resides in the cytoplasm. The protein localises to the cytoskeleton. It localises to the microtubule organizing center. It is found in the spindle pole body. Specialized component of the nuclear membrane that may be involved in the connection of the spindle pole body (SPB) to the nuclear envelope. Recruits CDC5 to spindle pole bodies in metaphase. This is CDC5 pindle pole body anchor protein 1 from Saccharomyces cerevisiae (strain ATCC 204508 / S288c) (Baker's yeast).